The chain runs to 223 residues: N-(5'-phosphoribosyl)anthranilate isomerase (223 aa).

It belongs to the TrpF family.

It carries out the reaction N-(5-phospho-beta-D-ribosyl)anthranilate = 1-(2-carboxyphenylamino)-1-deoxy-D-ribulose 5-phosphate. The protein operates within amino-acid biosynthesis; L-tryptophan biosynthesis; L-tryptophan from chorismate: step 3/5. The protein is N-(5'-phosphoribosyl)anthranilate isomerase of Moorella thermoacetica (strain ATCC 39073 / JCM 9320).